The sequence spans 172 residues: Hemagglutinin/amebocyte aggregation factor (172 aa).

A signal peptide spans 1–19 (MNSPAIVIIIFSTLTFSEA). 4 consecutive repeat copies span residues 21-25 (VNDWD), 50-54 (EDRRW), 73-77 (VNDWD), and 102-106 (EDRRW). Intrachain disulfides connect Cys32/Cys58, Cys67/Cys172, Cys84/Cys110, Cys111/Cys117, and Cys123/Cys167. 2 consecutive repeat copies span residues 129-133 (VNSWD) and 158-162 (EDRRW).

The protein belongs to the dermatopontin family.

It localises to the secreted. In terms of biological role, possesses the property of inducing both aggregation of amebocytes and agglutination of erythrocytes. The polypeptide is Hemagglutinin/amebocyte aggregation factor (Limulus polyphemus (Atlantic horseshoe crab)).